We begin with the raw amino-acid sequence, 137 residues long: Cofilin (137 aa).

The ADF-H domain maps to 5–135; sequence GVKVSPECLE…AYETVLEKVT (131 aa).

Belongs to the actin-binding proteins ADF family.

The protein localises to the cytoplasm. Its subcellular location is the cytoskeleton. It is found in the nucleus matrix. Functionally, controls reversibly actin polymerization and depolymerization in a pH-sensitive manner. It has the ability to bind G- and F-actin in a 1:1 ratio of cofilin to actin. Binding to F-actin is regulated by tropomyosin. It is the major component of intranuclear and cytoplasmic actin rods. Required for accumulation of actin at the cell division site via depolymerizing actin at the cell ends. In association with myosin II has a role in the assembly of the contractile ring via severing actin filaments. Involved in the maintenance of the contractile ring once formed. In association with profilin and capping protein, has a role in the mitotic reorganization of the actin cytoskeleton. Severs actin filaments (F-actin). In Schizosaccharomyces pombe (strain 972 / ATCC 24843) (Fission yeast), this protein is Cofilin (cof1).